Consider the following 24-residue polypeptide: Humanin-like 7 (24 aa).

It belongs to the humanin family. In terms of tissue distribution, expressed in testis.

Its subcellular location is the secreted. It is found in the cytoplasm. Plays a role as a neuroprotective and antiapoptotic factor. This Homo sapiens (Human) protein is Humanin-like 7.